The primary structure comprises 239 residues: Phosphoglycolate phosphatase (239 aa).

Residue Asp14 is the Nucleophile of the active site. Mg(2+) contacts are provided by Asp14 and Asp16. Lys160 is a substrate binding site. Mg(2+) contacts are provided by Asp183 and Asp187.

Belongs to the archaeal SPP-like hydrolase family. The cofactor is Mg(2+).

The catalysed reaction is 2-phosphoglycolate + H2O = glycolate + phosphate. Catalyzes the dephosphorylation of 2-phosphoglycolate. The protein is Phosphoglycolate phosphatase of Aeropyrum pernix (strain ATCC 700893 / DSM 11879 / JCM 9820 / NBRC 100138 / K1).